The chain runs to 144 residues: Maximins 9/H3 (144 aa).

Positions Met-1–Ala-18 are cleaved as a signal peptide. Residues Arg-19–Arg-43 constitute a propeptide that is removed on maturation. Tyr-70 carries the tyrosine amide modification. Positions Thr-74–Arg-123 are excised as a propeptide. Ile-143 is modified (isoleucine amide).

The protein belongs to the bombinin family. As to expression, expressed by the skin glands.

It localises to the secreted. Functionally, maximin-9 shows antimicrobial activity against bacteria and against the fungus C.albicans. It has little hemolytic activity. Maximin-H3 shows antibacterial activity against both Gram-positive and Gram-negative bacteria. It also shows antimicrobial activity against the fungus C.albicans. Shows strong hemolytic activity. This is Maximins 9/H3 from Bombina maxima (Giant fire-bellied toad).